Reading from the N-terminus, the 307-residue chain is Protein TIPIN homolog (307 aa).

Disordered regions lie at residues 1-50 and 252-279; these read MASL…SQDA and ASMDISDYGQPLPPSQPPTPAAKKLSNE. The segment covering 262–271 has biased composition (pro residues); sequence PLPPSQPPTP.

The protein belongs to the CSM3 family.

Its subcellular location is the cytoplasm. The protein localises to the nucleus. Required for normal progression of S-phase. Important for cell survival after DNA damage or replication stress. This chain is Protein TIPIN homolog, found in Drosophila melanogaster (Fruit fly).